A 317-amino-acid chain; its full sequence is Coproporphyrinogen-III oxidase, aerobic 1 (317 aa).

Residues 38–47 (VLRDGAIFEQ) form an important for dimerization region. A substrate-binding site is contributed by Ser-82. The active-site Proton donor is His-96. Substrate-binding positions include 98-100 (NYR) and 269-274 (NGRTES). Positions 251–286 (YVEFNLVYDRGTIFGLQTNGRTESILMSLPPLVRWE) are important for dimerization.

The protein belongs to the aerobic coproporphyrinogen-III oxidase family. As to quaternary structure, homodimer.

It localises to the cytoplasm. It carries out the reaction coproporphyrinogen III + O2 + 2 H(+) = protoporphyrinogen IX + 2 CO2 + 2 H2O. Its pathway is porphyrin-containing compound metabolism; protoporphyrin-IX biosynthesis; protoporphyrinogen-IX from coproporphyrinogen-III (O2 route): step 1/1. Functionally, key enzyme in heme biosynthesis. Catalyzes the oxidative decarboxylation of propionic acid side chains of rings A and B of coproporphyrinogen III. In Nostoc sp. (strain PCC 7120 / SAG 25.82 / UTEX 2576), this protein is Coproporphyrinogen-III oxidase, aerobic 1.